The sequence spans 84 residues: MQCRAGCGACCIAPSISSPLPGMPAGKPAGVRCLHLDENHLCGLFGRPERPAVCGQFGADPEICGDSREQALALIAEWEVITAA.

It belongs to the UPF0153 family.

The chain is UPF0153 protein PA1578.1 from Pseudomonas aeruginosa (strain ATCC 15692 / DSM 22644 / CIP 104116 / JCM 14847 / LMG 12228 / 1C / PRS 101 / PAO1).